A 267-amino-acid chain; its full sequence is Cell division protein FtsQ (267 aa).

Residues 1–32 (MRKKTSSNKKNTAKKNNNISLHRKLGLIYKKT) are Cytoplasmic-facing. A helical transmembrane segment spans residues 33–53 (ILILKIVLIIFICLFAFTKYF). Topologically, residues 54–267 (ASLKSYLKTN…DKNKYYIEKY (214 aa)) are periplasmic. A POTRA domain is found at 73–141 (FKLENVIIEG…STIYIKLFER (69 aa)).

This sequence belongs to the FtsQ/DivIB family. FtsQ subfamily.

It is found in the cell inner membrane. In terms of biological role, essential cell division protein. This chain is Cell division protein FtsQ, found in Rickettsia bellii (strain RML369-C).